An 84-amino-acid chain; its full sequence is Exodeoxyribonuclease 7 small subunit (84 aa).

It belongs to the XseB family. In terms of assembly, heterooligomer composed of large and small subunits.

The protein localises to the cytoplasm. The catalysed reaction is Exonucleolytic cleavage in either 5'- to 3'- or 3'- to 5'-direction to yield nucleoside 5'-phosphates.. Bidirectionally degrades single-stranded DNA into large acid-insoluble oligonucleotides, which are then degraded further into small acid-soluble oligonucleotides. This Janthinobacterium sp. (strain Marseille) (Minibacterium massiliensis) protein is Exodeoxyribonuclease 7 small subunit.